The chain runs to 108 residues: MATTDDISVEVAYALPERQSLVRLKVPAGTTARDAIGLSGLLDQYPGIDADTMKIGIFSRPVKADTVLREHDRVEIYRPLIADPKAVRRARAEAGKAMKKGGGDGDTP.

This sequence belongs to the UPF0125 (RnfH) family.

The sequence is that of Protein RnfH from Laribacter hongkongensis (strain HLHK9).